Here is a 916-residue protein sequence, read N- to C-terminus: Beta-scruin (916 aa).

Kelch repeat units lie at residues 82 to 133, 134 to 187, 188 to 235, 237 to 289, 291 to 341, and 342 to 390; these read AVLI…YFHG, KVYL…IMDE, RIFV…NNEG, IYVV…TQNK, IWIW…KAGT, and QVFI…GIPV. The interval 393–426 is disordered; it reads SPASDITTSKTTRSGSRKTQKTLKDKQQSDIHAR. A compositionally biased stretch (basic and acidic residues) spans 414 to 425; it reads TLKDKQQSDIHA. 6 Kelch repeats span residues 586 to 637, 638 to 691, 692 to 739, 741 to 793, 795 to 847, and 849 to 896; these read VIIA…YYRG, AIYV…VFND, SIYV…SHGG, LWVM…VCDD, IWLC…ALES, and LYLI…TIPP.

As to expression, sperm.

In terms of biological role, may have an enzymatic role. Found the acrosomal vesicle at the anterior of sperm but not in the acrosomal process. The chain is Beta-scruin from Limulus polyphemus (Atlantic horseshoe crab).